Here is a 499-residue protein sequence, read N- to C-terminus: Glutamyl-tRNA(Gln) amidotransferase subunit B, chloroplastic/mitochondrial (499 aa).

This sequence belongs to the GatB/GatE family. GatB subfamily. Subunit of the heterotrimeric GatCAB amidotransferase (AdT) complex, composed of A, B and C subunits.

It is found in the mitochondrion. The protein resides in the plastid. The protein localises to the chloroplast. The catalysed reaction is L-glutamyl-tRNA(Gln) + L-glutamine + ATP + H2O = L-glutaminyl-tRNA(Gln) + L-glutamate + ADP + phosphate + H(+). In terms of biological role, allows the formation of correctly charged Gln-tRNA(Gln) through the transamidation of misacylated Glu-tRNA(Gln) in chloroplasts and mitochondria. The reaction takes place in the presence of glutamine and ATP through an activated gamma-phospho-Glu-tRNA(Gln). The protein is Glutamyl-tRNA(Gln) amidotransferase subunit B, chloroplastic/mitochondrial of Ostreococcus lucimarinus (strain CCE9901).